A 989-amino-acid chain; its full sequence is Mediator of RNA polymerase II transcription subunit 24 (989 aa).

6 short sequence motifs (LXXLL motif) span residues 343–347, 359–363, 447–451, 556–560, 787–791, and 857–861; these read LTPLL, LSLLL, LDLLL, LVALL, LPRLL, and LMRLL.

The protein belongs to the Mediator complex subunit 24 family. Component of the Mediator complex.

The protein resides in the nucleus. In terms of biological role, component of the Mediator complex, a coactivator involved in the regulated transcription of nearly all RNA polymerase II-dependent genes. Mediator functions as a bridge to convey information from gene-specific regulatory proteins to the basal RNA polymerase II transcription machinery. Mediator is recruited to promoters by direct interactions with regulatory proteins and serves as a scaffold for the assembly of a functional preinitiation complex with RNA polymerase II and the general transcription factors. Required for proliferation of enteric nervous system precursors. Required for the development of dopaminergic amacrine cells and rod photoreceptor cells in the retina. The chain is Mediator of RNA polymerase II transcription subunit 24 (med24) from Danio rerio (Zebrafish).